The chain runs to 436 residues: Trigger factor (436 aa).

One can recognise a PPIase FKBP-type domain in the interval 161-246; that stretch reads DDQLNIDFVG…VNSVAEPKLP (86 aa).

It belongs to the FKBP-type PPIase family. Tig subfamily.

The protein resides in the cytoplasm. The enzyme catalyses [protein]-peptidylproline (omega=180) = [protein]-peptidylproline (omega=0). Its function is as follows. Involved in protein export. Acts as a chaperone by maintaining the newly synthesized protein in an open conformation. Functions as a peptidyl-prolyl cis-trans isomerase. The polypeptide is Trigger factor (Pseudomonas aeruginosa (strain LESB58)).